We begin with the raw amino-acid sequence, 208 residues long: N-(5'-phosphoribosyl)anthranilate isomerase (208 aa).

It belongs to the TrpF family.

It catalyses the reaction N-(5-phospho-beta-D-ribosyl)anthranilate = 1-(2-carboxyphenylamino)-1-deoxy-D-ribulose 5-phosphate. It participates in amino-acid biosynthesis; L-tryptophan biosynthesis; L-tryptophan from chorismate: step 3/5. The polypeptide is N-(5'-phosphoribosyl)anthranilate isomerase (Neisseria gonorrhoeae (strain NCCP11945)).